Consider the following 1528-residue polypeptide: Rho GTPase-activating protein 7 (1528 aa).

3 disordered regions span residues 72–94 (DFPG…HEGE), 288–310 (MSAE…PPKV), and 372–436 (ALST…TKPK). Basic and acidic residues predominate over residues 81–94 (LSKDVDENDSHEGE). Residues 374–384 (STSSSPSGTPT) show a composition bias toward low complexity. Polar residues predominate over residues 396–436 (GSESGADTISVNQTRVNLSSDTESTDLPSSTPVANSGTKPK). One can recognise an SAM domain in the interval 448–515 (KAEIEAKEAC…LNKCAVMKLE (68 aa)). Serine 523, serine 526, and serine 566 each carry phosphoserine. Disordered regions lie at residues 558-617 (PKQD…ATPR), 732-764 (RSVS…RTRS), 829-876 (PSGN…SSRL), and 928-990 (SDEG…GVGA). 2 stretches are compositionally biased toward low complexity: residues 591-605 (VSSV…SLPS) and 734-760 (VSNS…SPVT). The segment at 710 to 884 (QLNCVEISAL…RLSIYDNVPG (175 aa)) is focal adhesion-targeting (FAT). Serine 757 is modified (phosphoserine). The span at 851-862 (LRRENSSDSPKE) shows a compositional bias: basic and acidic residues. Residues 936–948 (ALDSVSPCPSSPK) are compositionally biased toward polar residues. Residues 950–960 (IHLDVDNDRTT) show a composition bias toward basic and acidic residues. The span at 961–972 (PSDLDSTGNSLN) shows a compositional bias: polar residues. A polybasic cluster (PBR) region spans residues 1051-1073 (KHGFSWAVPKFMKRIKVPDYKDR). The region spanning 1078–1284 (VPLTVNVQRT…HMIAECKKLF (207 aa)) is the Rho-GAP domain. Positions 1314–1521 (GNDDSADYQH…RDSFSNQNTE (208 aa)) constitute an START domain.

In terms of assembly, interacts with EF1A1, facilitates EF1A1 distribution to the membrane periphery and ruffles upon growth factor stimulation and suppresses cell migration. Interacts with tensin TNS1 (via N-terminus); the interaction is decreased by phosphorylation of TNS1. Interacts with TNS3 and PTEN; in resting cells, interacts with TNS3 (via C2 tensin-type domain) but, following growth factor stimulation, TNS3 and PTEN are phosphorylated which leads to weakened interaction with TNS3 and enhanced interaction with PTEN. Interacts (via C-terminus) with tensin TNS4 (via SH2 domain); the interaction is independent of tyrosine phosphorylation of DLC1. Highest level of expression in the spleen, with rather lower levels in prostate, testis, ovary, small intestine and colon, but none in the thymus.

Its subcellular location is the cytoplasm. The protein localises to the cell junction. It localises to the focal adhesion. It is found in the membrane. Its function is as follows. Functions as a GTPase-activating protein for the small GTPases RHOA, RHOB, RHOC and CDC42, terminating their downstream signaling. This induces morphological changes and detachment through cytoskeletal reorganization, playing a critical role in biological processes such as cell migration and proliferation. Also functions in vivo as an activator of the phospholipase PLCD1. Active DLC1 increases cell migration velocity but reduces directionality. Required for growth factor-induced epithelial cell migration; in resting cells, interacts with TNS3 while PTEN interacts with the p85 regulatory subunit of the PI3K kinase complex but growth factor stimulation induces phosphorylation of TNS3 and PTEN, causing them to change their binding preference so that PTEN interacts with DLC1 and TNS3 interacts with p85. The PTEN-DLC1 complex translocates to the posterior of migrating cells to activate RHOA while the TNS3-p85 complex translocates to the leading edge of migrating cells to promote RAC1 activation. The chain is Rho GTPase-activating protein 7 (DLC1) from Homo sapiens (Human).